The primary structure comprises 465 residues: Cysteine--tRNA ligase (465 aa).

Residue C27 coordinates Zn(2+). The short motif at 29–39 is the 'HIGH' region element; the sequence is PTTYNYIHIGN. Zn(2+) contacts are provided by C207, H232, and E236. Residues 264 to 268 carry the 'KMSKS' region motif; that stretch reads KMSKS. An ATP-binding site is contributed by K267.

The protein belongs to the class-I aminoacyl-tRNA synthetase family. As to quaternary structure, monomer. Requires Zn(2+) as cofactor.

It localises to the cytoplasm. It catalyses the reaction tRNA(Cys) + L-cysteine + ATP = L-cysteinyl-tRNA(Cys) + AMP + diphosphate. The polypeptide is Cysteine--tRNA ligase (Carboxydothermus hydrogenoformans (strain ATCC BAA-161 / DSM 6008 / Z-2901)).